Reading from the N-terminus, the 469-residue chain is Autophagy-related protein 18 (469 aa).

2 WD repeats span residues 188–228 (AHRS…KLYQ) and 233–272 (TYPS…NGAS). Residues 229 to 233 (FRRGT) carry the L/FRRG motif motif. Positions 285-348 (AASPGQDITG…RQSGSFSNIL (64 aa)) are disordered. The span at 297–306 (RADRWSRSRS) shows a compositional bias: basic and acidic residues. 2 stretches are compositionally biased toward polar residues: residues 307–319 (YDSG…SGSE) and 337–348 (NRRQSGSFSNIL).

This sequence belongs to the WD repeat PROPPIN family. As to quaternary structure, component of the PI(3,5)P2 regulatory complex.

It is found in the preautophagosomal structure membrane. The protein resides in the vacuole membrane. Its subcellular location is the endosome membrane. In terms of biological role, the PI(3,5)P2 regulatory complex regulates both the synthesis and turnover of phosphatidylinositol 3,5-bisphosphate (PtdIns(3,5)P2). Necessary for proper vacuole morphology. Plays an important role in osmotically-induced vacuole fragmentation. Required for cytoplasm to vacuole transport (Cvt) vesicle formation, pexophagy and starvation-induced autophagy. Involved in correct ATG9 trafficking to the pre-autophagosomal structure. Might also be involved in premeiotic DNA replication. This is Autophagy-related protein 18 (ATG18) from Pyricularia oryzae (strain 70-15 / ATCC MYA-4617 / FGSC 8958) (Rice blast fungus).